The primary structure comprises 1513 residues: Mucin-2 (1513 aa).

The first 20 residues, 1–20 (MGLPLARLVAVCLVLALAKG), serve as a signal peptide directing secretion. The 173-residue stretch at 32 to 204 (HVCSTWGDFH…KINKPEVVCE (173 aa)) folds into the VWFD 1 domain. Cystine bridges form between Cys34–Cys166, Cys56–Cys203, Cys64–Cys163, Cys215–Cys252, Cys222–Cys247, Cys234–Cys272, Cys254–Cys260, Cys262–Cys288, Cys292–Cys326, Cys309–Cys348, Cys328–Cys342, Cys350–Cys372, Cys367–Cys384, Cys370–Cys379, Cys388–Cys525, Cys410–Cys560, Cys432–Cys440, Cys571–Cys616, Cys585–Cys611, Cys598–Cys636, Cys618–Cys624, Cys626–Cys651, Cys658–Cys695, Cys671–Cys685, Cys675–Cys715, Cys697–Cys709, Cys717–Cys739, and Cys737–Cys746. Asp46 is a binding site for Ca(2+). Residues Met143 and Met151 each contribute to the Cu(+) site. Glu153 is a Cu(2+) binding site. Residue Asn160 is glycosylated (N-linked (GlcNAc...) asparagine). The Ca(2+) site is built by Asp168, Asn170, and Glu177. Residues His274 and His321 each coordinate Cu(2+). Residues 292–348 (CPGNMVYLESGSPWLDTCSHLEVSSLCEEHYMDGCFCPEGTVYDDITGSGCIPVSQC) enclose the TIL domain. Cu(+) is bound at residue Met323. Residues 350-410 (CKLHGHLYMP…GKKFTFHGDC (61 aa)) enclose the VWFC domain. The VWFD 2 domain maps to 386 to 561 (ETCALEGGSH…NTWKAQSSCH (176 aa)). Asp400 serves as a coordination point for Ca(2+). Asn420 carries an N-linked (GlcNAc...) asparagine glycan. Ca(2+) is bound by residues Asn527, Asn529, Leu531, Asp534, and Asp535. N-linked (GlcNAc...) asparagine glycosylation is present at Asn667. N-linked (GlcNAc...) asparagine glycosylation is present at Asn767. Intrachain disulfides connect Cys781-Cys817, Cys799-Cys811, Cys819-Cys842, Cys836-Cys854, Cys840-Cys849, Cys858-Cys989, Cys880-Cys1024, Cys889-Cys986, Cys906-Cys913, Cys1034-Cys1077, Cys1048-Cys1072, Cys1059-Cys1099, Cys1079-Cys1087, Cys1089-Cys1114, Cys1105-Cys1134, Cys1118-Cys1160, Cys1142-Cys1184, Cys1164-Cys1178, Cys1186-Cys1210, Cys1205-Cys1235, and Cys1208-Cys1218. Asn837 carries an N-linked (GlcNAc...) asparagine glycan. The region spanning 856–1025 (STCSIYGSGH…NSWKEASTCP (170 aa)) is the VWFD 3 domain. A Ca(2+)-binding site is contributed by Asp870. Residue Asn892 is glycosylated (N-linked (GlcNAc...) asparagine). 4 residues coordinate Ca(2+): Asn991, Asp993, Asn998, and Asp999. Asn1136 and Asn1151 each carry an N-linked (GlcNAc...) asparagine glycan. Residues Asn1212, Asn1227, and Asn1243 are each glycosylated (N-linked (GlcNAc...) asparagine). Thr1264, Thr1267, Thr1268, and Thr1280 each carry an O-linked (GalNAc) threonine glycan. O-linked (GalNAc) serine glycosylation occurs at Ser1286. Thr1290 is a glycosylation site (O-linked (GalNAc) threonine). Ca(2+) contacts are provided by Asn1303, His1306, Ser1309, Gly1313, Asp1314, and Glu1316. Asn1350 carries N-linked (GlcNAc...) asparagine glycosylation. Residues Asp1373 and Tyr1374 each coordinate Ca(2+). 11 tandem repeats follow at residues 1392-1407 (SPTT…QPTS), 1408-1423 (SPTT…SSAT), 1424-1434 (SPTTSHITSTV), 1435-1445 (SPTTSPTTSTT), 1446-1456 (SPTTSPTTSTT), 1457-1467 (SPTTSTTSPTP), 1468-1478 (SPTTSTTSPTP), 1479-1489 (SPTTSTTSPTP), 1490-1500 (SPTTSTTSPTT), 1501-1511 (SPITSPTTSTT), and 1512-1513 (SP). The segment at 1392-1513 (SPTTSTPISS…TSPTTSTTSP (122 aa)) is approximate repeats. The tract at residues 1392–1513 (SPTTSTPISS…TSPTTSTTSP (122 aa)) is disordered.

In terms of assembly, homomultimer; disulfide-linked. The N- and C-terminus mediate their assembly into higher order structures to form filaments. The CTCK domains of two polypeptides associate in the endoplasmic reticulum to generate intermolecularly disulfide-bonded dimers. These dimers progress to the Golgi apparatus, which is a more acidic environment than the endoplasmic reticulum. Under acidic conditions, the N-termini form non-covalent intermolecular interactions that juxtapose assemblies of the third VWD domain (VWD3) from different CTCK-linked dimers. The VWD3 assemblies then become disulfide bonded to one another to produce long, disulfide-linked polymers that remain highly compact until secretion. Interacts with FCGBP. Interacts with AGR2; disulfide-linked. Post-translationally, O-glycosylated. O-glycosylation is required for mucin assembly. Goblet cells synthesize two forms of mucin that differ in branched chain O-glycosylation and the site of production in the colon. May undergo proteolytic cleavage in the outer mucus layer of the colon, contributing to the expanded volume and loose nature of this layer which allows for bacterial colonization in contrast to the inner mucus layer which is dense and devoid of bacteria. In terms of processing, at low pH of 6 and under, undergoes autocatalytic cleavage in vitro in the N-terminal region of the fourth VWD domain. It is likely that this also occurs in vivo and is triggered by the low pH of the late secretory pathway. As to expression, expressed in intestine and airway.

It localises to the secreted. Its function is as follows. Coats the epithelia of the intestines and other mucus membrane-containing organs to provide a protective, lubricating barrier against particles and infectious agents at mucosal surfaces. Major constituent of the colon mucus, which is mainly formed by large polymeric networks of MUC2 secreted by goblet cells that cover the exposed surfaces of intestine. MUC2 networks form hydrogels that guard the underlying epithelium from pathogens and other hazardous matter entering from the outside world, while permitting nutrient absorption and gas exchange. Acts as a divalent copper chaperone that protects intestinal cells from copper toxicity and facilitates nutritional copper unptake into cells. Binds both Cu(2+) and its reduced form, Cu(1+), at two juxtaposed binding sites: Cu(2+), once reduced to Cu(1+) by vitamin C (ascorbate) or other dietary antioxidants, transits to the other binding site. MUC2-bound Cu(1+) is protected from oxidation in aerobic environments, and can be released for nutritional delivery to cells. Mucin gels store antimicrobial molecules that participate in innate immunity. Mucin glycoproteins also house and feed the microbiome, lubricate tissue surfaces, and may facilitate the removal of contaminants and waste products from the body. Goblet cells synthesize two forms of MUC2 mucin that differ in branched chain O-glycosylation and the site of production in the colon: a (1) 'thick' mucus that wraps the microbiota to form fecal pellets is produced in the proximal, ascending colon. 'Thick' mucus transits along the descending colon and is lubricated by a (2) 'thin' MUC2 mucus produced in the distal colon which adheres to the 'thick' mucus. In Rattus norvegicus (Rat), this protein is Mucin-2.